A 121-amino-acid polypeptide reads, in one-letter code: UPF0212 protein VNG_0879C (121 aa).

The protein belongs to the UPF0212 family.

In Halobacterium salinarum (strain ATCC 700922 / JCM 11081 / NRC-1) (Halobacterium halobium), this protein is UPF0212 protein VNG_0879C.